The primary structure comprises 242 residues: MLCCMRRTKQVEKNDEDQKIEQDGIKPEDKAHKAATKIQASFRGHITRKKLKGEKKGDAQAAEAEGNEKDEAPVADGVEKKEGEGPTPTDGAPASGPKAEETGKAGETPSEEKKGEGTPDAATEQAAPQAPVPSEEKAGSAETESATKASTDNSPSSKAEDAPAKEEPKQADVPAAVTAAAAATTPAAEDAAAKATAQPPTDAVESSQAEEKIEAVDETKPKESARQDEGKGEEREADQEHA.

Residues 1-242 form a disordered region; that stretch reads MLCCMRRTKQ…EEREADQEHA (242 aa). Residues Cys-3 and Cys-4 are each lipidated (S-palmitoyl cysteine). Positions 9–32 are enriched in basic and acidic residues; it reads KQVEKNDEDQKIEQDGIKPEDKAH. The IQ domain maps to 31–60; the sequence is AHKAATKIQASFRGHITRKKLKGEKKGDAQ. A Phosphoserine; by PHK and PKC modification is found at Ser-41. 2 stretches are compositionally biased toward basic and acidic residues: residues 66-84 and 98-117; these read GNEK…KEGE and KAEE…KGEG. The segment covering 142 to 157 has biased composition (polar residues); it reads ETESATKASTDNSPSS. A phosphoserine mark is found at Ser-154, Ser-156, and Ser-157. Residues 158-170 are compositionally biased toward basic and acidic residues; the sequence is KAEDAPAKEEPKQ. A compositionally biased stretch (low complexity) spans 171 to 203; it reads ADVPAAVTAAAAATTPAAEDAAAKATAQPPTDA. Thr-185 carries the post-translational modification Phosphothreonine. Phosphoserine; by CK2 occurs at positions 206 and 207. Positions 209-242 are enriched in basic and acidic residues; it reads AEEKIEAVDETKPKESARQDEGKGEEREADQEHA.

This sequence belongs to the neuromodulin family. As to quaternary structure, identified in a complex containing FGFR4, NCAM1, CDH2, PLCG1, FRS2, SRC, SHC1, GAP43 and CTTN. Interacts (via IQ domain) with calmodulin. Binds calmodulin with a greater affinity in the absence of Ca(2+) than in its presence. In terms of processing, phosphorylated. Phosphorylation of this protein by a protein kinase C is specifically correlated with certain forms of synaptic plasticity. Post-translationally, palmitoylated by ZDHHC3. Palmitoylation is regulated by ARF6 and is essential for plasma membrane association and axonal and dendritic filopodia induction. Deacylated by LYPLA2.

It is found in the cell membrane. Its subcellular location is the cell projection. It localises to the growth cone membrane. The protein localises to the synapse. The protein resides in the filopodium membrane. It is found in the perikaryon. Its subcellular location is the dendrite. It localises to the axon. The protein localises to the cytoplasm. In terms of biological role, this protein is associated with nerve growth. It is a major component of the motile 'growth cones' that form the tips of elongating axons. Plays a role in axonal and dendritic filopodia induction. The chain is Neuromodulin (GAP43) from Felis catus (Cat).